A 994-amino-acid chain; its full sequence is UPF0182 protein Strop_3729 (994 aa).

7 consecutive transmembrane segments (helical) span residues 18-38 (IGVL…VQAW), 61-81 (LLLF…NLWL), 110-130 (IGLW…LSAQ), 174-194 (FTAV…FGGI), 209-229 (AHLS…YVLD), 260-280 (ILAY…NAWM), and 283-303 (LVWP…IGGI). Disordered stretches follow at residues 891–934 (GEQA…AEAA) and 970–994 (FEQA…SPGG). A compositionally biased stretch (pro residues) spans 897–926 (PSPPPSDDETPPSPTPTPTPTTPSVTPPPL).

Belongs to the UPF0182 family.

It is found in the cell membrane. In Salinispora tropica (strain ATCC BAA-916 / DSM 44818 / JCM 13857 / NBRC 105044 / CNB-440), this protein is UPF0182 protein Strop_3729.